Consider the following 367-residue polypeptide: Dual-specificity RNA methyltransferase RlmN (367 aa).

E93 serves as the catalytic Proton acceptor. Positions 99–333 constitute a Radical SAM core domain; it reads EEDRATLCVS…VIVRKTRGDD (235 aa). Cysteines 106 and 338 form a disulfide. C113, C117, and C120 together coordinate [4Fe-4S] cluster. S-adenosyl-L-methionine-binding positions include 162–163, S194, 216–218, and N295; these read GE and SLH. Catalysis depends on C338, which acts as the S-methylcysteine intermediate.

This sequence belongs to the radical SAM superfamily. RlmN family. [4Fe-4S] cluster serves as cofactor.

The protein resides in the cytoplasm. It catalyses the reaction adenosine(2503) in 23S rRNA + 2 reduced [2Fe-2S]-[ferredoxin] + 2 S-adenosyl-L-methionine = 2-methyladenosine(2503) in 23S rRNA + 5'-deoxyadenosine + L-methionine + 2 oxidized [2Fe-2S]-[ferredoxin] + S-adenosyl-L-homocysteine. The catalysed reaction is adenosine(37) in tRNA + 2 reduced [2Fe-2S]-[ferredoxin] + 2 S-adenosyl-L-methionine = 2-methyladenosine(37) in tRNA + 5'-deoxyadenosine + L-methionine + 2 oxidized [2Fe-2S]-[ferredoxin] + S-adenosyl-L-homocysteine. Functionally, specifically methylates position 2 of adenine 2503 in 23S rRNA and position 2 of adenine 37 in tRNAs. m2A2503 modification seems to play a crucial role in the proofreading step occurring at the peptidyl transferase center and thus would serve to optimize ribosomal fidelity. This is Dual-specificity RNA methyltransferase RlmN from Aeromonas hydrophila subsp. hydrophila (strain ATCC 7966 / DSM 30187 / BCRC 13018 / CCUG 14551 / JCM 1027 / KCTC 2358 / NCIMB 9240 / NCTC 8049).